Here is a 236-residue protein sequence, read N- to C-terminus: Ribosome-inactivating protein saporin-3 (236 aa).

Residue Glu148 is part of the active site.

Belongs to the ribosome-inactivating protein family. Type 1 RIP subfamily.

It catalyses the reaction Endohydrolysis of the N-glycosidic bond at one specific adenosine on the 28S rRNA.. Ribosome-inactivating protein of type 1, inhibits protein synthesis in animal cells. Useful as immunotoxin for pharmacological applications. This is Ribosome-inactivating protein saporin-3 (SAP3) from Saponaria officinalis (Common soapwort).